The sequence spans 495 residues: MSKYLLAIDQGTTSSRAIIFSAQGLPVARAQQEFKQYFPQDGWVEHDGQEIWLSTLKVCREAIASSGLQAEAIAAIGITNQRETTLVWDAASGTPIHLAIVWQDRRTADYCAGLKDAGHEAMVSAKTGLLIDPYFSATKLRWILENVPGARERAQRGELRFGTVDSFLLWRLTGGKVHRTDASNASRTLMFNIHTQQWDQDLLELFDIPASLLPEVLDCAAEFGHAEAELLGASIPVLGMAGDQQAALIGQACFEPGMVKSTYGTGCFMIQNTGDQPVSSKNRLLTTVGYRLGGKVTYAVEGSIFVAGAAVQWLRDGIKLISHARDSEALAEATGEACGVYLVPAFTGLGAPYWDPKARGAIFGLTRDTGIKEIVTAGLQSVCYQTRDLLEAMRQDGAAAPSALRVDGGMVENNWVMQFLADILGVSVERPEVTETTALGVAYLAGLQLGLYPDLQAIASHWHRQQRFEPRMSETHRERLYAGWLDAVKRVRSEG.

Thr12 contributes to the ADP binding site. Residues Thr12, Thr13, and Ser14 each coordinate ATP. Thr12 is a binding site for sn-glycerol 3-phosphate. Arg16 contributes to the ADP binding site. Residues Arg82, Glu83, Tyr134, and Asp243 each coordinate sn-glycerol 3-phosphate. Glycerol is bound by residues Arg82, Glu83, Tyr134, Asp243, and Gln244. Residues Thr265 and Gly308 each coordinate ADP. Residues Thr265, Gly308, Gln312, and Gly409 each contribute to the ATP site. ADP is bound by residues Gly409 and Asn413.

This sequence belongs to the FGGY kinase family.

It carries out the reaction glycerol + ATP = sn-glycerol 3-phosphate + ADP + H(+). The protein operates within polyol metabolism; glycerol degradation via glycerol kinase pathway; sn-glycerol 3-phosphate from glycerol: step 1/1. Its activity is regulated as follows. Inhibited by fructose 1,6-bisphosphate (FBP). Functionally, key enzyme in the regulation of glycerol uptake and metabolism. Catalyzes the phosphorylation of glycerol to yield sn-glycerol 3-phosphate. This Ectopseudomonas mendocina (strain ymp) (Pseudomonas mendocina) protein is Glycerol kinase.